Here is a 323-residue protein sequence, read N- to C-terminus: MIRSVVRGIGSALPKRVMKNTDFEGIVETSDEWIVQRTGIRERHIAGEGETTVSLGAAAARAAIENAGLQPSDIDLVLLATSTPNNTFPASAVAIQRELGITRGFAFDLQAVCSGFIYAITTADLYIRGGMARRVLVIGAETFSRILDWTDRTTCVLFGDGAGAIVLEAAEGHGLTSDRGILATNLRSDGNHKEKLYVDGGPSTTQTVGHLRMEGREVFKHAVGMITDVIEASFEATGLTAEDIDWFVPHQANKRIIDASAKKLHIAEEKVVITVDRHGNTSAASVPLALATAVADGRIKKGDLVLLEAMGGGFTWGAVLVRW.

Catalysis depends on residues C113 and H250. Residues 251–255 (QANKR) are ACP-binding. N280 is an active-site residue.

It belongs to the thiolase-like superfamily. FabH family. As to quaternary structure, homodimer.

It localises to the cytoplasm. The enzyme catalyses malonyl-[ACP] + acetyl-CoA + H(+) = 3-oxobutanoyl-[ACP] + CO2 + CoA. It functions in the pathway lipid metabolism; fatty acid biosynthesis. Functionally, catalyzes the condensation reaction of fatty acid synthesis by the addition to an acyl acceptor of two carbons from malonyl-ACP. Catalyzes the first condensation reaction which initiates fatty acid synthesis and may therefore play a role in governing the total rate of fatty acid production. Possesses both acetoacetyl-ACP synthase and acetyl transacylase activities. Its substrate specificity determines the biosynthesis of branched-chain and/or straight-chain of fatty acids. In Brucella suis (strain ATCC 23445 / NCTC 10510), this protein is Beta-ketoacyl-[acyl-carrier-protein] synthase III.